A 177-amino-acid polypeptide reads, in one-letter code: NAD(P)H-quinone oxidoreductase subunit 6, chloroplastic (177 aa).

5 helical membrane-spanning segments follow: residues 10-30, 32-52, 61-81, 93-115, and 152-172; these read ILLV…VLLT, PIYS…FHIL, AQLL…VMFM, WTVG…IATI, and FFLP…GAIA.

Belongs to the complex I subunit 6 family. NDH is composed of at least 16 different subunits, 5 of which are encoded in the nucleus.

The protein localises to the plastid. It localises to the chloroplast thylakoid membrane. It carries out the reaction a plastoquinone + NADH + (n+1) H(+)(in) = a plastoquinol + NAD(+) + n H(+)(out). The catalysed reaction is a plastoquinone + NADPH + (n+1) H(+)(in) = a plastoquinol + NADP(+) + n H(+)(out). NDH shuttles electrons from NAD(P)H:plastoquinone, via FMN and iron-sulfur (Fe-S) centers, to quinones in the photosynthetic chain and possibly in a chloroplast respiratory chain. The immediate electron acceptor for the enzyme in this species is believed to be plastoquinone. Couples the redox reaction to proton translocation, and thus conserves the redox energy in a proton gradient. The chain is NAD(P)H-quinone oxidoreductase subunit 6, chloroplastic (ndhG) from Amborella trichopoda.